Here is a 555-residue protein sequence, read N- to C-terminus: Glutamine--tRNA ligase (555 aa).

Positions 34–44 match the 'HIGH' region motif; that stretch reads PEPNGYLHIGH. ATP is bound by residues 35–37 and 41–47; these read EPN and HIGHAKS. The L-glutamine site is built by aspartate 67 and tyrosine 212. Residues threonine 231, 261–262, and 269–271 each bind ATP; these read RL and MSK. Residues 268–272 carry the 'KMSKS' region motif; it reads VMSKR.

Belongs to the class-I aminoacyl-tRNA synthetase family. As to quaternary structure, monomer.

The protein localises to the cytoplasm. It carries out the reaction tRNA(Gln) + L-glutamine + ATP = L-glutaminyl-tRNA(Gln) + AMP + diphosphate. In Cronobacter sakazakii (strain ATCC BAA-894) (Enterobacter sakazakii), this protein is Glutamine--tRNA ligase.